The primary structure comprises 530 residues: Meiosis 1 arrest protein (530 aa).

The interval 463–530 is disordered; sequence LHPHWESRAP…SEWEKDPSRP (68 aa). Low complexity predominate over residues 503–516; it reads ASKMPAASKSSSDA.

Its subcellular location is the cytoplasm. In terms of biological role, required for meiosis I progression during spermatogenesis. This Homo sapiens (Human) protein is Meiosis 1 arrest protein (M1AP).